A 367-amino-acid polypeptide reads, in one-letter code: Phospho-N-acetylmuramoyl-pentapeptide-transferase (367 aa).

10 helical membrane-spanning segments follow: residues 13-33 (ISGIGLASSLAAGLGIAALTL), 49-69 (LPLLLCTIASAIAGYFVVPLL), 95-115 (MGGIFFIPVAVVGACVLSNFA), 119-139 (LAVSALTLSYGLIGWIDDWQI), 154-174 (LALQICFAAAFCLWLMFNQPA), 183-203 (WVSFALPLGFLFWPLAGFVLV), 215-235 (IDGLAGGTVAIALLALGAIVA), 237-257 (TSPALMVFCAALSGSCLGFLA), 281-301 (AVALLTNSLVALFILSGIFFV), and 347-367 (VSSFYVIATILAVICLAIAPF).

This sequence belongs to the glycosyltransferase 4 family. MraY subfamily. Requires Mg(2+) as cofactor.

The protein resides in the cell inner membrane. The enzyme catalyses UDP-N-acetyl-alpha-D-muramoyl-L-alanyl-gamma-D-glutamyl-meso-2,6-diaminopimeloyl-D-alanyl-D-alanine + di-trans,octa-cis-undecaprenyl phosphate = di-trans,octa-cis-undecaprenyl diphospho-N-acetyl-alpha-D-muramoyl-L-alanyl-D-glutamyl-meso-2,6-diaminopimeloyl-D-alanyl-D-alanine + UMP. It participates in cell wall biogenesis; peptidoglycan biosynthesis. In terms of biological role, catalyzes the initial step of the lipid cycle reactions in the biosynthesis of the cell wall peptidoglycan: transfers peptidoglycan precursor phospho-MurNAc-pentapeptide from UDP-MurNAc-pentapeptide onto the lipid carrier undecaprenyl phosphate, yielding undecaprenyl-pyrophosphoryl-MurNAc-pentapeptide, known as lipid I. The polypeptide is Phospho-N-acetylmuramoyl-pentapeptide-transferase (Trichormus variabilis (strain ATCC 29413 / PCC 7937) (Anabaena variabilis)).